The sequence spans 94 residues: Translation initiation factor 1A 2 (94 aa).

One can recognise an S1-like domain in the interval 6 to 80 (GRRNLRMPND…EKANVEWRYS (75 aa)).

This sequence belongs to the eIF-1A family.

Functionally, seems to be required for maximal rate of protein biosynthesis. Enhances ribosome dissociation into subunits and stabilizes the binding of the initiator Met-tRNA(I) to 40 S ribosomal subunits. The polypeptide is Translation initiation factor 1A 2 (eIF1A2) (Halobacterium salinarum (strain ATCC 700922 / JCM 11081 / NRC-1) (Halobacterium halobium)).